Here is a 762-residue protein sequence, read N- to C-terminus: Polyadenylate-binding protein, cytoplasmic and nuclear (762 aa).

The disordered stretch occupies residues 39–58; that stretch reads TGEEIDTAGPTPSSAAPHPQ. The segment covering 48 to 58 has biased composition (low complexity); the sequence is PTPSSAAPHPQ. RRM domains follow at residues 61-139, 149-226, 242-320, and 346-470; these read ASLY…WSQR, GNVF…HHIP, TNIY…RAQK, and VNLY…LAQR. Disordered regions lie at residues 376 to 429, 596 to 663, and 740 to 762; these read KVMR…KSKL, SALA…AGAP, and VRQQGDGEGAQAPSKEEKTEEKA. A compositionally biased stretch (basic and acidic residues) spans 389–425; sequence GESKEGEESEKNKENKPEEKEGDDSKPEEKEGEDSKS. Over residues 600–612 the composition is skewed to gly residues; it reads GGRGGPAGRGPMQ. Over residues 645–663 the composition is skewed to low complexity; the sequence is AAGRAPAGAPAGARGAGAP. A PABC domain is found at 664-741; that stretch reads EGLQGQLAAV…ALAVYDDYVR (78 aa). Over residues 753 to 762 the composition is skewed to basic and acidic residues; the sequence is SKEEKTEEKA.

Belongs to the polyadenylate-binding protein type-1 family.

Its subcellular location is the cytoplasm. It localises to the nucleus. Binds the poly(A) tail of mRNA. Appears to be an important mediator of the multiple roles of the poly(A) tail in mRNA biogenesis, stability and translation. In the nucleus, involved in both mRNA cleavage and polyadenylation. Is also required for efficient mRNA export to the cytoplasm. Acts in concert with a poly(A)-specific nuclease (PAN) to affect poly(A) tail shortening, which may occur concomitantly with either nucleocytoplasmic mRNA transport or translational initiation. In the cytoplasm, stimulates translation initiation and regulates mRNA decay through translation termination-coupled poly(A) shortening, probably mediated by PAN. In Pyricularia oryzae (strain 70-15 / ATCC MYA-4617 / FGSC 8958) (Rice blast fungus), this protein is Polyadenylate-binding protein, cytoplasmic and nuclear (PAB1).